A 288-amino-acid chain; its full sequence is Cell division protein ZipA (288 aa).

A topological domain (periplasmic) is located at residue M1. Residues 2-22 (EIGLREWLIVIGIIVIAGILF) traverse the membrane as a helical segment. The Cytoplasmic segment spans residues 23–288 (DGWRRMRGGK…ERRALTQRRG (266 aa)). The segment at 48–138 (DEEETTSAEV…DDKPAQRITE (91 aa)) is disordered. Composition is skewed to basic and acidic residues over residues 64 to 77 (LDTH…EHDL), 85 to 105 (RDNK…KDEP), and 122 to 138 (ARDD…RITE).

This sequence belongs to the ZipA family. Interacts with FtsZ via their C-terminal domains.

Its subcellular location is the cell inner membrane. Functionally, essential cell division protein that stabilizes the FtsZ protofilaments by cross-linking them and that serves as a cytoplasmic membrane anchor for the Z ring. Also required for the recruitment to the septal ring of downstream cell division proteins. This is Cell division protein ZipA from Pseudomonas syringae pv. tomato (strain ATCC BAA-871 / DC3000).